The following is a 156-amino-acid chain: Ribosomal RNA large subunit methyltransferase H (156 aa).

S-adenosyl-L-methionine is bound by residues leucine 73, glycine 104, and 123–128; that span reads ISSMTL.

It belongs to the RNA methyltransferase RlmH family. As to quaternary structure, homodimer.

Its subcellular location is the cytoplasm. The catalysed reaction is pseudouridine(1915) in 23S rRNA + S-adenosyl-L-methionine = N(3)-methylpseudouridine(1915) in 23S rRNA + S-adenosyl-L-homocysteine + H(+). Functionally, specifically methylates the pseudouridine at position 1915 (m3Psi1915) in 23S rRNA. The polypeptide is Ribosomal RNA large subunit methyltransferase H (Burkholderia multivorans (strain ATCC 17616 / 249)).